Consider the following 209-residue polypeptide: Probable GTP-binding protein EngB (209 aa).

Positions 23–198 (NGAEIAFAGR…EKVVAGWLVP (176 aa)) constitute an EngB-type G domain. Residues 31 to 38 (GRSNAGKS), 58 to 62 (GRTQL), 76 to 79 (DLPG), 143 to 146 (TKSD), and 177 to 179 (FSS) contribute to the GTP site. Mg(2+) is bound by residues serine 38 and threonine 60.

This sequence belongs to the TRAFAC class TrmE-Era-EngA-EngB-Septin-like GTPase superfamily. EngB GTPase family. Requires Mg(2+) as cofactor.

Its function is as follows. Necessary for normal cell division and for the maintenance of normal septation. This is Probable GTP-binding protein EngB from Azoarcus sp. (strain BH72).